Consider the following 238-residue polypeptide: MRSDGRNPASLRNIRITRKYLKHAEGSVLVEFGDTKVLCTASVEESVPPFLRGKGGGWVTAEYSMLPRATHTRSPREAAKGKLGGRTHEIQRLIGRSLRAVTDLTLLGERSVLIDCDVLQADGGTRTASITGAYVALVDAFQWLVSQGTIATLPVREAVAAVSVGIVGGEVLLDLNYIEDSRADVDMNFVMTSSGRFVEVQGTAEAEPFTCAQMDDMRSLAMIGIERLMAIQQEVLEQ.

Phosphate contacts are provided by residues R86 and 124-126 (GTR).

It belongs to the RNase PH family. As to quaternary structure, homohexameric ring arranged as a trimer of dimers.

The catalysed reaction is tRNA(n+1) + phosphate = tRNA(n) + a ribonucleoside 5'-diphosphate. Phosphorolytic 3'-5' exoribonuclease that plays an important role in tRNA 3'-end maturation. Removes nucleotide residues following the 3'-CCA terminus of tRNAs; can also add nucleotides to the ends of RNA molecules by using nucleoside diphosphates as substrates, but this may not be physiologically important. Probably plays a role in initiation of 16S rRNA degradation (leading to ribosome degradation) during starvation. This Geobacter sulfurreducens (strain ATCC 51573 / DSM 12127 / PCA) protein is Ribonuclease PH.